Reading from the N-terminus, the 144-residue chain is MELNNLKPAEGAKHAKRRVGRGIGSGLGKTAGRGHKGQKSRSGGFHKVGFEGGQMPLQRRLPKRGFTSLTKEFVGEVRLGDLEKLPVDEVDLLALKQAGLVGELTKSAKIIATGELKRKIVVKGLGATKGARAAIEAAGGSFAE.

The segment at 1-59 (MELNNLKPAEGAKHAKRRVGRGIGSGLGKTAGRGHKGQKSRSGGFHKVGFEGGQMPLQR) is disordered. A compositionally biased stretch (gly residues) spans 21 to 31 (RGIGSGLGKTA).

This sequence belongs to the universal ribosomal protein uL15 family. Part of the 50S ribosomal subunit.

Binds to the 23S rRNA. The sequence is that of Large ribosomal subunit protein uL15 from Burkholderia thailandensis (strain ATCC 700388 / DSM 13276 / CCUG 48851 / CIP 106301 / E264).